A 451-amino-acid chain; its full sequence is UPF0210 protein CLH_1879 (451 aa).

Belongs to the UPF0210 family. In terms of assembly, homodimer.

This chain is UPF0210 protein CLH_1879, found in Clostridium botulinum (strain Alaska E43 / Type E3).